The chain runs to 279 residues: MIKKCLFPAAGYGTRFLPATKAMPKEMLPVVNKPLIQYAVEEALEAGLSEIGIVTGRGKRSLEDHFDISYELEHQIRNTDKEKYLVGIRRLIDECTFAYTRQVEMKGLGHAILTGRPLIGDEPFAVVLADDLCLNLEGDSVLKQMVKLYNQFRCSIVAIQEVPPEETNKYGVIAGEMIRDDIFRVNTMVEKPKPEEAPSNLAIIGRYILTPDIFDLIEQTEPGKGGEIQITDALMKQAQDGCVLAYKFKGKRFDCGSAEGYIEATNFCYENLYKTGKAH.

The protein belongs to the UDPGP type 2 family.

It carries out the reaction alpha-D-glucose 1-phosphate + UTP + H(+) = UDP-alpha-D-glucose + diphosphate. Its function is as follows. May play a role in stationary phase survival. The sequence is that of UTP--glucose-1-phosphate uridylyltransferase (galU) from Pseudomonas aeruginosa (strain ATCC 15692 / DSM 22644 / CIP 104116 / JCM 14847 / LMG 12228 / 1C / PRS 101 / PAO1).